The chain runs to 777 residues: Kelch domain-containing protein 7A (777 aa).

Residues 21 to 38 (VVLSAAALLLVTVAYRLY) form a helical membrane-spanning segment. Residues 43 to 207 (APAQRWGGNG…GLGQLEPPHC (165 aa)) form a disordered region. Position 86 is a phosphoserine (Ser86). The span at 113–127 (TDRKPQRKGSGEERG) shows a compositional bias: basic and acidic residues. N-linked (GlcNAc...) asparagine glycosylation occurs at Asn257. The interval 313-359 (LTEVPSPRPPPGSLGTGAASGGQAGDTKGAAERAASPQTGPWPSTRG) is disordered. The span at 326 to 336 (LGTGAASGGQA) shows a compositional bias: gly residues. 5 Kelch repeats span residues 328 to 374 (TGAA…ENPE), 492 to 538 (QYLV…ICSL), 541 to 589 (YLFV…ALDG), 590 to 632 (HLYA…ATVR), and 635 to 677 (EIFV…AVNG). The residue at position 365 (Ser365) is a Phosphoserine.

It is found in the membrane. In Homo sapiens (Human), this protein is Kelch domain-containing protein 7A (KLHDC7A).